The chain runs to 238 residues: tRNA (guanine-N(7)-)-methyltransferase (238 aa).

S-adenosyl-L-methionine-binding residues include glutamate 68, glutamate 93, aspartate 120, and aspartate 143. The active site involves aspartate 143. Substrate-binding positions include lysine 147, aspartate 179, and 216-219 (TKFE).

The protein belongs to the class I-like SAM-binding methyltransferase superfamily. TrmB family.

The enzyme catalyses guanosine(46) in tRNA + S-adenosyl-L-methionine = N(7)-methylguanosine(46) in tRNA + S-adenosyl-L-homocysteine. The protein operates within tRNA modification; N(7)-methylguanine-tRNA biosynthesis. Catalyzes the formation of N(7)-methylguanine at position 46 (m7G46) in tRNA. This is tRNA (guanine-N(7)-)-methyltransferase from Shewanella woodyi (strain ATCC 51908 / MS32).